Reading from the N-terminus, the 141-residue chain is Cystatin-SN (141 aa).

A signal peptide spans 1 to 20 (MAQYLSTLLLLLATLAVALA). A Secondary area of contact motif is present at residues 76-80 (QTVGG). 2 cysteine pairs are disulfide-bonded: C94–C104 and C118–C138.

It belongs to the cystatin family. In terms of tissue distribution, expressed in submandibular and sublingual saliva but not in parotid saliva (at protein level). Expressed in saliva, tears, urine and seminal fluid.

The protein localises to the secreted. In terms of biological role, human saliva appears to contain several cysteine proteinase inhibitors that are immunologically related to cystatin S but that differ in their specificity due to amino acid sequence differences. Cystatin SN, with a pI of 7.5, is a much better inhibitor of papain and dipeptidyl peptidase I than is cystatin S, although both inhibit ficin equally well. This Homo sapiens (Human) protein is Cystatin-SN (CST1).